Reading from the N-terminus, the 118-residue chain is M-zodatoxin-Lt8p (118 aa).

The first 3 residues, Ala1–Ser3, serve as a signal peptide directing secretion. A propeptide spanning residues Lys4–Arg43 is cleaved from the precursor.

This sequence belongs to the cationic peptide 06 (cytoinsectotoxin) family. Expressed by the venom gland.

The protein resides in the secreted. In terms of biological role, insecticidal, cytolytic and antimicrobial peptide. Forms voltage-dependent, ion-permeable channels in membranes. At high concentration causes cell membrane lysis. The protein is M-zodatoxin-Lt8p (cit 1-15) of Lachesana tarabaevi (Spider).